The sequence spans 369 residues: Anthranilate phosphoribosyltransferase (369 aa).

Residues Gly111, 114–115 (GD), Thr119, 121–124 (NIST), 139–147 (KHGNRGVSS), and Ser151 each bind 5-phospho-alpha-D-ribose 1-diphosphate. An anthranilate-binding site is contributed by Gly111. Residue Ser123 coordinates Mg(2+). Asn142 serves as a coordination point for anthranilate. Position 197 (Arg197) interacts with anthranilate. Mg(2+) contacts are provided by Asp256 and Glu257.

It belongs to the anthranilate phosphoribosyltransferase family. As to quaternary structure, homodimer. Mg(2+) is required as a cofactor.

The catalysed reaction is N-(5-phospho-beta-D-ribosyl)anthranilate + diphosphate = 5-phospho-alpha-D-ribose 1-diphosphate + anthranilate. It participates in amino-acid biosynthesis; L-tryptophan biosynthesis; L-tryptophan from chorismate: step 2/5. Its function is as follows. Catalyzes the transfer of the phosphoribosyl group of 5-phosphorylribose-1-pyrophosphate (PRPP) to anthranilate to yield N-(5'-phosphoribosyl)-anthranilate (PRA). The polypeptide is Anthranilate phosphoribosyltransferase (Cupriavidus pinatubonensis (strain JMP 134 / LMG 1197) (Cupriavidus necator (strain JMP 134))).